Consider the following 291-residue polypeptide: uncharacterized protein (291 aa).

Solcar repeat units lie at residues 15–93 (PGPV…IKKS), 104–190 (PRTV…IKQS), and 201–287 (LSTV…VMEI). 6 helical membrane passes run 21–41 (IIAG…AEFA), 70–90 (STVI…FDSI), 108–128 (LAGL…FESI), 169–189 (TVAR…SIKQ), 201–221 (LSTV…VYCT), and 259–280 (FWSG…VFTV).

This sequence belongs to the mitochondrial carrier (TC 2.A.29) family.

It localises to the mitochondrion inner membrane. This is an uncharacterized protein from Schizosaccharomyces pombe (strain 972 / ATCC 24843) (Fission yeast).